Consider the following 223-residue polypeptide: Deoxyribose-phosphate aldolase (223 aa).

Asp91 (proton donor/acceptor) is an active-site residue. Lys154 acts as the Schiff-base intermediate with acetaldehyde in catalysis. Lys183 acts as the Proton donor/acceptor in catalysis.

It belongs to the DeoC/FbaB aldolase family. DeoC type 1 subfamily.

Its subcellular location is the cytoplasm. It catalyses the reaction 2-deoxy-D-ribose 5-phosphate = D-glyceraldehyde 3-phosphate + acetaldehyde. The protein operates within carbohydrate degradation; 2-deoxy-D-ribose 1-phosphate degradation; D-glyceraldehyde 3-phosphate and acetaldehyde from 2-deoxy-alpha-D-ribose 1-phosphate: step 2/2. In terms of biological role, catalyzes a reversible aldol reaction between acetaldehyde and D-glyceraldehyde 3-phosphate to generate 2-deoxy-D-ribose 5-phosphate. The chain is Deoxyribose-phosphate aldolase from Geobacillus kaustophilus (strain HTA426).